The sequence spans 308 residues: 4-hydroxy-tetrahydrodipicolinate synthase (308 aa).

Residue threonine 56 participates in pyruvate binding. Residue tyrosine 144 is the Proton donor/acceptor of the active site. The active-site Schiff-base intermediate with substrate is lysine 172. Position 212 (valine 212) interacts with pyruvate.

This sequence belongs to the DapA family. As to quaternary structure, homotetramer; dimer of dimers.

It is found in the cytoplasm. The catalysed reaction is L-aspartate 4-semialdehyde + pyruvate = (2S,4S)-4-hydroxy-2,3,4,5-tetrahydrodipicolinate + H2O + H(+). Its pathway is amino-acid biosynthesis; L-lysine biosynthesis via DAP pathway; (S)-tetrahydrodipicolinate from L-aspartate: step 3/4. Functionally, catalyzes the condensation of (S)-aspartate-beta-semialdehyde [(S)-ASA] and pyruvate to 4-hydroxy-tetrahydrodipicolinate (HTPA). In Kineococcus radiotolerans (strain ATCC BAA-149 / DSM 14245 / SRS30216), this protein is 4-hydroxy-tetrahydrodipicolinate synthase.